A 332-amino-acid chain; its full sequence is Probable cytosolic iron-sulfur protein assembly protein 1 (332 aa).

7 WD repeats span residues 9-48 (GHTD…LVTT), 52-93 (GHNR…WQFL), 98-137 (GHEN…DEFE), 144-183 (DHTQ…WICV), 188-230 (GHES…GGTG), 257-295 (AHTR…QWVV), and 302-332 (AHGV…IWEV).

Belongs to the WD repeat CIA1 family. In terms of assembly, interacts with NAR1.

It localises to the cytoplasm. The protein localises to the nucleus. Essential component of the cytosolic iron-sulfur (Fe/S) protein assembly machinery. Required for the maturation of extramitochondrial Fe/S proteins. The sequence is that of Probable cytosolic iron-sulfur protein assembly protein 1 from Yarrowia lipolytica (strain CLIB 122 / E 150) (Yeast).